The following is a 114-amino-acid chain: Superoxide dismutase [Cu-Zn] (114 aa).

Residues H37, H39, and H54 each coordinate Cu cation. The tract at residues 48 to 68 (CMSSGPHFNPRNKEHGAPTDE) is disordered. The Zn(2+) site is built by H54, H62, H71, and D74. Basic and acidic residues predominate over residues 58 to 68 (RNKEHGAPTDE). H111 is a Cu cation binding site.

It belongs to the Cu-Zn superoxide dismutase family. As to quaternary structure, homodimer. Requires Cu cation as cofactor. Zn(2+) serves as cofactor.

It is found in the cytoplasm. The catalysed reaction is 2 superoxide + 2 H(+) = H2O2 + O2. In terms of biological role, destroys radicals which are normally produced within the cells and which are toxic to biological systems. The chain is Superoxide dismutase [Cu-Zn] from Drosophila miranda (Fruit fly).